Reading from the N-terminus, the 334-residue chain is Protein-methionine-sulfoxide reductase catalytic subunit MsrP (334 aa).

The segment at residues 1–44 (MKKNQFLKESDVTAESVFFMKRRQVLKALGISAAALSLPHAAHA) is a signal peptide (tat-type signal). Mo-molybdopterin-binding positions include Asn88, 91 to 92 (YE), Cys146, Thr181, Asn233, Arg238, and 249 to 251 (GIK).

Belongs to the MsrP family. As to quaternary structure, heterodimer of a catalytic subunit (MsrP) and a heme-binding subunit (MsrQ). The cofactor is Mo-molybdopterin. Post-translationally, predicted to be exported by the Tat system. The position of the signal peptide cleavage has not been experimentally proven.

The protein localises to the periplasm. The enzyme catalyses L-methionyl-[protein] + a quinone + H2O = L-methionyl-(S)-S-oxide-[protein] + a quinol. It carries out the reaction L-methionyl-[protein] + a quinone + H2O = L-methionyl-(R)-S-oxide-[protein] + a quinol. Part of the MsrPQ system that repairs oxidized periplasmic proteins containing methionine sulfoxide residues (Met-O), using respiratory chain electrons. Thus protects these proteins from oxidative-stress damage caused by reactive species of oxygen and chlorine generated by the host defense mechanisms. MsrPQ is essential for the maintenance of envelope integrity under bleach stress, rescuing a wide series of structurally unrelated periplasmic proteins from methionine oxidation, including the primary periplasmic chaperone SurA and the lipoprotein Pal. The catalytic subunit MsrP is non-stereospecific, being able to reduce both (R-) and (S-) diastereoisomers of methionine sulfoxide. The protein is Protein-methionine-sulfoxide reductase catalytic subunit MsrP of Escherichia coli O157:H7.